Consider the following 349-residue polypeptide: N-acetyl-gamma-glutamyl-phosphate reductase (349 aa).

Cysteine 149 is an active-site residue.

Belongs to the NAGSA dehydrogenase family. Type 1 subfamily.

The protein resides in the cytoplasm. The catalysed reaction is N-acetyl-L-glutamate 5-semialdehyde + phosphate + NADP(+) = N-acetyl-L-glutamyl 5-phosphate + NADPH + H(+). The protein operates within amino-acid biosynthesis; L-arginine biosynthesis; N(2)-acetyl-L-ornithine from L-glutamate: step 3/4. In terms of biological role, catalyzes the NADPH-dependent reduction of N-acetyl-5-glutamyl phosphate to yield N-acetyl-L-glutamate 5-semialdehyde. This chain is N-acetyl-gamma-glutamyl-phosphate reductase, found in Acinetobacter baumannii (strain AB307-0294).